The primary structure comprises 655 residues: p-hydroxybenzoic acid efflux pump subunit AaeB (655 aa).

At 1–12 (MGIFSIANQHIR) the chain is on the periplasmic side. A helical transmembrane segment spans residues 13 to 33 (FAVKLATAIVLALFVGFHFQL). Residues 34 to 37 (ETPR) lie on the Cytoplasmic side of the membrane. A helical transmembrane segment spans residues 38–58 (WAVLTAAIVAAGTAFAAGGEP). The Periplasmic portion of the chain corresponds to 59–68 (YSGAIRYRGF). Residues 69–89 (LRIIGTFIGCIAGLVIIIAMI) form a helical membrane-spanning segment. Topologically, residues 90–92 (RAP) are cytoplasmic. Residues 93–113 (LLMILVCCIWAGFCTWISSLV) form a helical membrane-spanning segment. Residues 114–120 (RIENSYA) are Periplasmic-facing. The chain crosses the membrane as a helical span at residues 121 to 141 (WGLAGYTALIIVITIQPEPLL). The Cytoplasmic portion of the chain corresponds to 142 to 151 (TPQFAVERCS). A helical transmembrane segment spans residues 152-172 (EIVIGIVCAIMADLLFSPRSI). Topologically, residues 173–369 (KQEVDRELES…RTTLSCILGT (197 aa)) are periplasmic. Residues 370 to 390 (LFWLWTGWTSGSGAMVMIAVV) traverse the membrane as a helical segment. Over 391–406 (TSLAMRLPNPRMVAID) the chain is Cytoplasmic. A helical transmembrane segment spans residues 407-427 (FIYGTLAALPLGLLYFLVIIP). Topologically, residues 428–430 (NTQ) are periplasmic. A helical membrane pass occupies residues 431-451 (QSMLLLCISLAVLGFFLGIEV). The Cytoplasmic segment spans residues 452 to 458 (QKRRLGS). A helical membrane pass occupies residues 459-479 (MGALASTINIIVLDNPMTFHF). Topologically, residues 480–481 (SQ) are periplasmic. A helical transmembrane segment spans residues 482 to 502 (FLDSALGQIVGCVLAFTVILL). Residues 503–655 (VRDKSRDRTG…HKYQHALTDS (153 aa)) lie on the Cytoplasmic side of the membrane.

It belongs to the aromatic acid exporter ArAE (TC 2.A.85) family.

It is found in the cell inner membrane. In terms of biological role, forms an efflux pump with AaeA. Could function as a metabolic relief valve, allowing to eliminate certain compounds when they accumulate to high levels in the cell. Substrates are p-hydroxybenzoic acid (pHBA), 6-hydroxy-2-naphthoic and 2-hydroxycinnamate. In Escherichia coli (strain K12), this protein is p-hydroxybenzoic acid efflux pump subunit AaeB.